Reading from the N-terminus, the 283-residue chain is MEPLPEPTSRPRLRPRPRCLLLLPLLLLLLLLLPAPELGPREARAEETDWVRLPSKCEVCKYVAVELKSAFEETGKTKEVIDTGYGILDRKASGVKYTKSDLRLIEVTETICKRLLDYSLHKERTGSNRFAKGMSETFETLHNLVHKGVKVVMDIPYELWNETSAEVADLKKQCDVLVEEFEEVIEDWYRNHQEEDLTQFLCANHVLKGKDTSCLAEQWSGKKGDTAALGGKKSKKKSSRAKASGGGSKQRKELGGIEGDPSPEEDEGIQKASPLTHSPPDEL.

A signal peptide spans 1–35 (MEPLPEPTSRPRLRPRPRCLLLLPLLLLLLLLLPA). The Saposin B-type domain maps to 55–276 (SKCEVCKYVA…EGIQKASPLT (222 aa)). N-linked (GlcNAc...) asparagine glycosylation is present at N161. The stretch at 161 to 187 (NETSAEVADLKKQCDVLVEEFEEVIED) forms a coiled coil. The interval 223 to 283 (KGDTAALGGK…PLTHSPPDEL (61 aa)) is disordered.

This sequence belongs to the canopy family. As to quaternary structure, interacts with HSP90B1; this interaction is disrupted in the presence of ATP. Interacts with TLR1, TLR2, TLR4 and TLR9.

Its subcellular location is the endoplasmic reticulum. Functionally, toll-like receptor (TLR)-specific co-chaperone for HSP90B1. Required for proper TLR folding, except that of TLR3, and hence controls TLR exit from the endoplasmic reticulum. Consequently, required for both innate and adaptive immune responses. In Sus scrofa (Pig), this protein is Protein canopy homolog 3 (CNPY3).